The chain runs to 818 residues: Actin filament-associated protein 1-like 2 (818 aa).

At tyrosine 56 the chain carries Phosphotyrosine. The disordered stretch occupies residues 66–163 (QNAESQGKAP…SKGKSAPYQW (98 aa)). Positions 85 to 94 (EPSQHSSAPQ) are enriched in polar residues. Over residues 123 to 139 (YYEEAEPYDTSLNEDGE) the composition is skewed to acidic residues. PH domains are found at residues 175–271 (DARI…EVSG) and 353–447 (SLET…SESG). Serine 408 bears the Phosphoserine mark. Tyrosine 413 is modified (phosphotyrosine). A Phosphoserine modification is found at serine 484. The disordered stretch occupies residues 513 to 532 (AAVEPTEEATPVADDPNERE). Residues 652 to 749 (AEIKLGKNRT…VKDNLKKAEA (98 aa)) adopt a coiled-coil conformation. A disordered region spans residues 765 to 787 (NVSPRPKAVTPASAPDCTPVNSA).

Interacts with SRC. Interacts with LCK when tyrosine phosphorylated. In terms of processing, tyrosine phosphorylated (by SRC). Detected in spleen and thyroid, and at lower levels in kidney, brain, lung and pancreas.

It localises to the cytoplasm. In terms of biological role, may play a role in a signaling cascade by enhancing the kinase activity of SRC. Contributes to SRC-regulated transcription activation. The sequence is that of Actin filament-associated protein 1-like 2 (AFAP1L2) from Homo sapiens (Human).